A 191-amino-acid polypeptide reads, in one-letter code: MGAYDGAEAPRAAPASTAANSRPSRLLLLHSLLLRLVAVVLSILVIAVMVHAKQRVMIFKAEWDNSKAFVALVTISAICLGYSFLQFILSAFHLCSKSWKSPTKCWAWMNFIADQILTYAMLGAAAAAAELAYIAKNGSSRAQWQPICSTFNTFCTRAGASIILSFIAVLALANSSAISAYHLFRRPSSSV.

Residues 1-25 are Cytoplasmic-facing; it reads MGAYDGAEAPRAAPASTAANSRPSR. Residues 26–46 form a helical membrane-spanning segment; sequence LLLLHSLLLRLVAVVLSILVI. Residues 47 to 68 are Extracellular-facing; the sequence is AVMVHAKQRVMIFKAEWDNSKA. A helical membrane pass occupies residues 69–89; the sequence is FVALVTISAICLGYSFLQFIL. At 90–114 the chain is on the cytoplasmic side; it reads SAFHLCSKSWKSPTKCWAWMNFIAD. A helical transmembrane segment spans residues 115–135; the sequence is QILTYAMLGAAAAAAELAYIA. The Extracellular segment spans residues 136–157; that stretch reads KNGSSRAQWQPICSTFNTFCTR. An N-linked (GlcNAc...) asparagine glycan is attached at N137. The chain crosses the membrane as a helical span at residues 158-178; it reads AGASIILSFIAVLALANSSAI. Over 179 to 191 the chain is Cytoplasmic; it reads SAYHLFRRPSSSV.

Belongs to the Casparian strip membrane proteins (CASP) family. As to quaternary structure, homodimer and heterodimers.

It localises to the cell membrane. This Selaginella moellendorffii (Spikemoss) protein is CASP-like protein 2U4.